Reading from the N-terminus, the 77-residue chain is U8-lycotoxin-Ls1v (77 aa).

The first 20 residues, 1-20 (MKLIIFTGLVLFGIVSLIEA), serve as a signal peptide directing secretion. Positions 21–26 (QAENEK) are excised as a propeptide.

The protein belongs to the neurotoxin 19 (CSTX) family. 08 (U8-Lctx) subfamily. Post-translationally, contains 4 disulfide bonds. As to expression, expressed by the venom gland.

Its subcellular location is the secreted. This Lycosa singoriensis (Wolf spider) protein is U8-lycotoxin-Ls1v.